The following is a 262-amino-acid chain: Aminoglycoside (3'') (9) adenylyltransferase (262 aa).

It carries out the reaction streptomycin + ATP = 3''-O-adenylylstreptomycin + diphosphate. It catalyses the reaction spectinomycin + ATP = 9-O-adenylylspectinomycin + diphosphate. In terms of biological role, mediates bacterial resistance to the antibiotics streptomycin and spectinomycin. In Klebsiella pneumoniae, this protein is Aminoglycoside (3'') (9) adenylyltransferase.